Consider the following 493-residue polypeptide: MAQVINTNSLSLLTQNNLNKSQSALGTAIERLSSGLRINSAKDDAAGQAIANRFTANIKGLTQASRNANDGISIAQTTEGALNEINNNLQRVRELAVQSANSTNSQSDLDSIQAEITQRLNEIDRVSGQTQFNGVKVLAQDNTLTIQVGANDGETIDIDLKQINSQTLGLDTLNVQQKYKVSDTAATVTGYTDSATAIDKSTFAASATTLGGTPAITGDLKFDDTTGKYYADVSGTTAKDGVYEVTVAADGKVTLTGTPTGPITAGFPSTATKDVKQTQQENADLTEAKAALTAAGVAAAGHRSVVKMSYTDNNGKTIDGGLAVKVGDDYYSATQNKDGSISINTTKYTADNGTSKTALNKLGGADGKTEVVSIGGKTYAASKAEGHNFKAQPDLAEAAATTTENPLQKIDAALAQVDTLRSDLGAVQNRFNSAITNLGNTVNNLTSARSRIEDSDYATEVSNMSRAQILQQAGTSVLAQANQVPQNVLSLLR.

This sequence belongs to the bacterial flagellin family.

The protein resides in the secreted. Its subcellular location is the bacterial flagellum. Functionally, flagellin is the subunit protein which polymerizes to form the filaments of bacterial flagella. This chain is Flagellin (fliC), found in Salmonella rubislaw.